The primary structure comprises 416 residues: tRNA(Met) cytidine acetate ligase (416 aa).

ATP contacts are provided by residues 7–20, Gly-101, Asn-162, and 187–188; these read VVEY…HLHH and RI.

This sequence belongs to the TmcAL family.

It localises to the cytoplasm. It catalyses the reaction cytidine(34) in elongator tRNA(Met) + acetate + ATP = N(4)-acetylcytidine(34) in elongator tRNA(Met) + AMP + diphosphate. Catalyzes the formation of N(4)-acetylcytidine (ac(4)C) at the wobble position of elongator tRNA(Met), using acetate and ATP as substrates. First activates an acetate ion to form acetyladenylate (Ac-AMP) and then transfers the acetyl group to tRNA to form ac(4)C34. The protein is tRNA(Met) cytidine acetate ligase of Halalkalibacterium halodurans (strain ATCC BAA-125 / DSM 18197 / FERM 7344 / JCM 9153 / C-125) (Bacillus halodurans).